We begin with the raw amino-acid sequence, 159 residues long: F1845 fimbrial protein (159 aa).

Residues 1–21 (MKKLAIMAAASMIFTVGSAQA) form the signal peptide.

Belongs to the Dr-adhesin family.

It is found in the fimbrium. Hemagglutinins of uropathogenic E.coli mediate adherence to the upper urinary tract. These adhesins bind to the Dr blood group antigen and also agglutinate human erythrocytes in the presence of D-mannose (mannose-resistant hemagglutination (MRHA)). C1845 is a strain responsible for diarrheal disease. The polypeptide is F1845 fimbrial protein (daaE) (Escherichia coli).